Reading from the N-terminus, the 543-residue chain is MGITTALLLVMLMSVHTSSYETTILKPYKEDNFRSLVAKACQFIDAHELCVSNIWTHVKESGHGLNPHSVLRAAVKEAHDKAKLAMERIPTVMMLSIRSREQVAIEDCKELVGFSVTELAWSMLEMNKLHGGGGIDLDDGSHDAAAAGGNLKTWLSAAMSNQDTCLEGFEGTERKYEELIKGSLRQVTQLVSNVLDMYTQLNALPFKASRNESVIASPEWLTETDESLMMRHDPSVMHPNTVVAIDGKGKYRTINEAINEAPNHSTKRYVIYVKKGVYKENIDLKKKKTNIMLVGDGIGQTIITGDRNFMQGLTTFRTATVAVSGRGFIAKDITFRNTAGPQNRQAVALRVDSDQSAFYRCSVEGYQDTLYAHSLRQFYRDCEIYGTIDFIFGNGAAVLQNCKIYTRVPLPLQKVTITAQGRKSPNQNTGFVIQNSYVLATQPTYLGRPWKLYSRTVYMNTYMSQLVQPRGWLEWFGNFALDTLWYGEYNNIGPGWRSSGRVKWPGYHIMDKRTALSFTVGSFIDGRRWLPATGVTFTAGLAN.

A signal peptide spans 1 to 19; sequence MGITTALLLVMLMSVHTSS. The tract at residues 38 to 197 is pectinesterase inhibitor 22; the sequence is AKACQFIDAH…TQLVSNVLDM (160 aa). Residues Asn-211 and Asn-263 are each glycosylated (N-linked (GlcNAc...) asparagine). Residues 240–527 are pectinesterase 22; the sequence is NTVVAIDGKG…FTVGSFIDGR (288 aa). Thr-315 and Gln-345 together coordinate substrate. The Proton donor; for pectinesterase activity role is filled by Asp-368. A disulfide bridge links Cys-382 with Cys-402. Asp-389 acts as the Nucleophile; for pectinesterase activity in catalysis. Arg-448 and Trp-450 together coordinate substrate.

In the N-terminal section; belongs to the PMEI family. This sequence in the C-terminal section; belongs to the pectinesterase family.

The protein resides in the secreted. It is found in the cell wall. It catalyses the reaction [(1-&gt;4)-alpha-D-galacturonosyl methyl ester](n) + n H2O = [(1-&gt;4)-alpha-D-galacturonosyl](n) + n methanol + n H(+). The protein operates within glycan metabolism; pectin degradation; 2-dehydro-3-deoxy-D-gluconate from pectin: step 1/5. Its function is as follows. Acts in the modification of cell walls via demethylesterification of cell wall pectin. This chain is Putative pectinesterase/pectinesterase inhibitor 22 (PME22), found in Arabidopsis thaliana (Mouse-ear cress).